The sequence spans 608 residues: Isocitrate dehydrogenase kinase/phosphatase (608 aa).

Residues 327–333 and K348 contribute to the ATP site; that span reads APGIKGL. The active site involves D383.

The protein belongs to the AceK family.

It localises to the cytoplasm. The catalysed reaction is L-seryl-[isocitrate dehydrogenase] + ATP = O-phospho-L-seryl-[isocitrate dehydrogenase] + ADP + H(+). Its function is as follows. Bifunctional enzyme which can phosphorylate or dephosphorylate isocitrate dehydrogenase (IDH) on a specific serine residue. This is a regulatory mechanism which enables bacteria to bypass the Krebs cycle via the glyoxylate shunt in response to the source of carbon. When bacteria are grown on glucose, IDH is fully active and unphosphorylated, but when grown on acetate or ethanol, the activity of IDH declines drastically concomitant with its phosphorylation. In Burkholderia ambifaria (strain ATCC BAA-244 / DSM 16087 / CCUG 44356 / LMG 19182 / AMMD) (Burkholderia cepacia (strain AMMD)), this protein is Isocitrate dehydrogenase kinase/phosphatase.